A 326-amino-acid chain; its full sequence is Probable cell division protein WhiA (326 aa).

A DNA-binding region (H-T-H motif) is located at residues 275–308 (SLEELGQLSDPPLTKDAVAGRIRRLLAMADKKAS).

Belongs to the WhiA family.

Involved in cell division and chromosome segregation. This chain is Probable cell division protein WhiA, found in Beutenbergia cavernae (strain ATCC BAA-8 / DSM 12333 / CCUG 43141 / JCM 11478 / NBRC 16432 / NCIMB 13614 / HKI 0122).